Reading from the N-terminus, the 245-residue chain is 1-(5-phosphoribosyl)-5-[(5-phosphoribosylamino)methylideneamino] imidazole-4-carboxamide isomerase (245 aa).

The Proton acceptor role is filled by D12. Catalysis depends on D131, which acts as the Proton donor.

The protein belongs to the HisA/HisF family.

Its subcellular location is the cytoplasm. It catalyses the reaction 1-(5-phospho-beta-D-ribosyl)-5-[(5-phospho-beta-D-ribosylamino)methylideneamino]imidazole-4-carboxamide = 5-[(5-phospho-1-deoxy-D-ribulos-1-ylimino)methylamino]-1-(5-phospho-beta-D-ribosyl)imidazole-4-carboxamide. It functions in the pathway amino-acid biosynthesis; L-histidine biosynthesis; L-histidine from 5-phospho-alpha-D-ribose 1-diphosphate: step 4/9. The chain is 1-(5-phosphoribosyl)-5-[(5-phosphoribosylamino)methylideneamino] imidazole-4-carboxamide isomerase from Thermobifida fusca (strain YX).